Consider the following 62-residue polypeptide: Alpha-toxin Tf4 (62 aa).

One can recognise an LCN-type CS-alpha/beta domain in the interval 2–62 (KEGYPADSKG…SVWDSATNKC (61 aa)). 4 disulfides stabilise this stretch: cysteine 12/cysteine 62, cysteine 16/cysteine 38, cysteine 24/cysteine 43, and cysteine 28/cysteine 45. Cysteine 62 is subject to Cysteine amide.

Expressed by the venom gland.

Its subcellular location is the secreted. Functionally, alpha toxins bind voltage-independently at site-3 of sodium channels (Nav) and inhibit the inactivation of the activated channels, thereby blocking neuronal transmission. This toxin is toxic to frogs but non-toxic to insect larvae (T.molitor), mammals (rats) and crustaceans (crabs) at the doses assayed. In Tityus fasciolatus (Central Brazilian scorpion), this protein is Alpha-toxin Tf4.